The chain runs to 376 residues: RNA binding protein fox-1 homolog 1 (376 aa).

A disordered region spans residues 1–126 (MEEKGSRMVQ…QPKRLHVSNI (126 aa)). Positions 72-89 (QTHSEQSPADTNAQTVSG) are enriched in polar residues. Residues 90-101 (TATQTDDAAPTD) are compositionally biased toward low complexity. Polar residues predominate over residues 102–115 (GQPQTQPSENTENK). The 77-residue stretch at 119 to 195 (KRLHVSNIPF…RKIEVNNATA (77 aa)) folds into the RRM domain. Arg319 carries the post-translational modification Asymmetric dimethylarginine.

As to quaternary structure, binds to the C-terminus of ATXN2.

It is found in the nucleus. Its subcellular location is the cytoplasm. Its function is as follows. RNA-binding protein that regulates alternative splicing events by binding to 5'-UGCAUGU-3' elements. Prevents binding of U2AF2 to the 3'-splice site. Regulates alternative splicing of tissue-specific exons and of differentially spliced exons during erythropoiesis. This chain is RNA binding protein fox-1 homolog 1 (RBFOX1), found in Macaca fascicularis (Crab-eating macaque).